The primary structure comprises 456 residues: Molybdate transporter 1 (456 aa).

Transmembrane regions (helical) follow at residues Leu67–Val87, Ile110–Met130, Val133–Phe153, Pro177–Val197, Val225–Ile245, Ala309–Met329, Leu354–Leu374, Phe377–Ala397, and Leu417–Met437.

This sequence belongs to the SLC26A/SulP transporter (TC 2.A.53) family. In terms of tissue distribution, strongly expressed in roots. Detected in the vascular tissues of hypocotyls, in petioles and vascular tissues of cotyledons and leaves, in mesophyll cells, stamen, sepals and siliques.

Its subcellular location is the cell membrane. The protein localises to the endomembrane system. It is found in the mitochondrion membrane. Not inhibited by sulfate. In terms of biological role, high affinity molybdate transporter. Unable to transport sulfate. In Arabidopsis thaliana (Mouse-ear cress), this protein is Molybdate transporter 1 (MOT1).